A 51-amino-acid chain; its full sequence is Basic phospholipase A2 Bfon11 (51 aa).

Ca(2+)-binding residues include Y27, G29, and G31. C28 and C43 form a disulfide bridge. Residue H46 is part of the active site. Position 47 (D47) interacts with Ca(2+).

Belongs to the phospholipase A2 family. Group II subfamily. D49 sub-subfamily. It depends on Ca(2+) as a cofactor. As to expression, expressed by the venom gland.

The protein localises to the secreted. The enzyme catalyses a 1,2-diacyl-sn-glycero-3-phosphocholine + H2O = a 1-acyl-sn-glycero-3-phosphocholine + a fatty acid + H(+). Snake venom phospholipase A2 (PLA2) that impairs hemostasis. PLA2 catalyzes the calcium-dependent hydrolysis of the 2-acyl groups in 3-sn-phosphoglycerides. This chain is Basic phospholipase A2 Bfon11, found in Bothrops fonsecai (Fonseca's lancehead).